The primary structure comprises 235 residues: Probable septum site-determining protein MinC (235 aa).

Residues 104–125 are disordered; sequence KAVRPAPVEPATPSEPPQNANP. Positions 110-119 are enriched in pro residues; it reads PVEPATPSEP.

The protein belongs to the MinC family. Interacts with MinD and FtsZ.

In terms of biological role, cell division inhibitor that blocks the formation of polar Z ring septums. Rapidly oscillates between the poles of the cell to destabilize FtsZ filaments that have formed before they mature into polar Z rings. Prevents FtsZ polymerization. The polypeptide is Probable septum site-determining protein MinC (Salmonella enteritidis PT4 (strain P125109)).